A 270-amino-acid chain; its full sequence is MSDESRPSPAETPATTFAETSAETSAAGRSPARTAAVIPAAGRGVRLGPGAPKALRALGGTPMLIHAVRAMAASRAVSLVVVVAPPDGAGEVKSLLDAHALPERTDFVVVPGGETRQESVRLGLDALPPEYGIVLVHDAARPLVPVDTVDAVIDAVREGAPAVVPAVPLADTVKQVEPAAAPGEPEPVVATPERARLRAVQTPQGFDRATLVRAHGTVTDDVTDDASMVEQLGLAVVVVPGHEEAFKVTRPLDLVLAEAVLARRRLNDGF.

The tract at residues 1–33 (MSDESRPSPAETPATTFAETSAETSAAGRSPAR) is disordered. Over residues 7–27 (PSPAETPATTFAETSAETSAA) the composition is skewed to low complexity.

The protein belongs to the IspD/TarI cytidylyltransferase family. IspD subfamily.

The catalysed reaction is 2-C-methyl-D-erythritol 4-phosphate + CTP + H(+) = 4-CDP-2-C-methyl-D-erythritol + diphosphate. The protein operates within isoprenoid biosynthesis; isopentenyl diphosphate biosynthesis via DXP pathway; isopentenyl diphosphate from 1-deoxy-D-xylulose 5-phosphate: step 2/6. Catalyzes the formation of 4-diphosphocytidyl-2-C-methyl-D-erythritol from CTP and 2-C-methyl-D-erythritol 4-phosphate (MEP). In Streptomyces coelicolor (strain ATCC BAA-471 / A3(2) / M145), this protein is 2-C-methyl-D-erythritol 4-phosphate cytidylyltransferase.